Here is a 131-residue protein sequence, read N- to C-terminus: Small ribosomal subunit protein uS8 (131 aa).

The protein belongs to the universal ribosomal protein uS8 family. As to quaternary structure, part of the 30S ribosomal subunit. Contacts proteins S5 and S12.

In terms of biological role, one of the primary rRNA binding proteins, it binds directly to 16S rRNA central domain where it helps coordinate assembly of the platform of the 30S subunit. This is Small ribosomal subunit protein uS8 from Geobacillus stearothermophilus (Bacillus stearothermophilus).